Reading from the N-terminus, the 1020-residue chain is Sodium/potassium-transporting ATPase subunit alpha-2 (1020 aa).

Positions 1–5 (MGRGA) are excised as a propeptide. A disordered region spans residues 1–31 (MGRGAGREYSPAATTAENGGGKKKQKEKELD). The Cytoplasmic portion of the chain corresponds to 6–85 (GREYSPAATT…NALTPPPTTP (80 aa)). Position 10 is a phosphoserine (S10). The segment at 80-82 (PPP) is interaction with phosphoinositide-3 kinase. A helical membrane pass occupies residues 86–106 (EWVKFCRQLFGGFSILLWIGA). At 107–129 (LLCFLAYGILAAMEDEPSNDNLY) the chain is on the extracellular side. Residues 130–150 (LGIVLAAVVIVTGCFSYYQEA) traverse the membrane as a helical segment. Topologically, residues 151 to 286 (KSSKIMDSFK…VGQTPIAMEI (136 aa)) are cytoplasmic. Positions 212–227 (DNSSLTGESEPQTRSP) are enriched in polar residues. The segment at 212 to 231 (DNSSLTGESEPQTRSPEFTH) is disordered. Residues 287-306 (EHFIQLITGVAVFLGVSFFV) traverse the membrane as a helical segment. Residues 307 to 318 (LSLILGYSWLEA) lie on the Extracellular side of the membrane. Residues 319–336 (VIFLIGIIVANVPEGLLA) form a helical membrane-spanning segment. Over 337–769 (TVTVCLTLTA…EEGRLIFDNL (433 aa)) the chain is Cytoplasmic. Residue D374 is the 4-aspartylphosphate intermediate of the active site. Phosphoserine occurs at positions 439, 450, 496, and 559. Residue T570 is modified to Phosphothreonine. Residues S587 and S672 each carry the phosphoserine modification. Mg(2+) contacts are provided by D714 and D718. The chain crosses the membrane as a helical span at residues 770-789 (KKSIAYTLTSNIPEITPFLL). Residues 790–799 (FIIANIPLPL) are Extracellular-facing. Residues 800–820 (GTVTILCIDLGTDMVPAISLA) form a helical membrane-spanning segment. Residues 821-840 (YEAAESDIMKRQPRNSQTDK) lie on the Cytoplasmic side of the membrane. S826 bears the Phosphoserine mark. The chain crosses the membrane as a helical span at residues 841–863 (LVNERLISMAYGQIGMIQALGGF). Over 864–915 (FTYFVILAENGFLPSRLLGIRLDWDDRTTNDLEDSYGQEWTYEQRKVVEFTC) the chain is Extracellular. The helical transmembrane segment at 916-935 (HTAFFASIVVVQWADLIICK) threads the bilayer. The Cytoplasmic portion of the chain corresponds to 936–948 (TRRNSVFQQGMKN). Position 940 is a phosphoserine; by PKA (S940). The chain crosses the membrane as a helical span at residues 949-967 (KILIFGLLEETALAAFLSY). The Extracellular segment spans residues 968–982 (CPGMGVALRMYPLKV). A helical transmembrane segment spans residues 983-1003 (TWWFCAFPYSLLIFIYDEVRK). The Cytoplasmic segment spans residues 1004–1020 (LILRRYPGGWVEKETYY).

Belongs to the cation transport ATPase (P-type) (TC 3.A.3) family. Type IIC subfamily. The sodium/potassium-transporting ATPase is composed of a catalytic alpha subunit, an auxiliary non-catalytic beta subunit and an additional regulatory subunit. Interacts with regulatory subunit FXYD1.

It is found in the membrane. The protein localises to the cell membrane. The catalysed reaction is K(+)(out) + Na(+)(in) + ATP + H2O = K(+)(in) + Na(+)(out) + ADP + phosphate + H(+). Its function is as follows. This is the catalytic component of the active enzyme, which catalyzes the hydrolysis of ATP coupled with the exchange of sodium and potassium ions across the plasma membrane. This action creates the electrochemical gradient of sodium and potassium ions, providing the energy for active transport of various nutrients. This Mus musculus (Mouse) protein is Sodium/potassium-transporting ATPase subunit alpha-2 (Atp1a2).